The sequence spans 309 residues: Taste receptor type 2 member 46 (309 aa).

A topological domain (extracellular) is located at residue Met-1. Residues Ile-2–Phe-22 traverse the membrane as a helical segment. Over Ala-23–Gln-46 the chain is Cytoplasmic. Residues Ile-47–Tyr-67 traverse the membrane as a helical segment. Over Ala-68–Asn-86 the chain is Extracellular. A helical membrane pass occupies residues Val-87–Leu-107. Residues Leu-108–Lys-126 are Cytoplasmic-facing. Residues Ser-127–Ile-147 traverse the membrane as a helical segment. At Asn-148–Thr-178 the chain is on the extracellular side. An N-linked (GlcNAc...) asparagine glycan is attached at Asn-161. A helical membrane pass occupies residues Val-179 to Ile-199. Residues Cys-200 to Gln-229 lie on the Cytoplasmic side of the membrane. Residues Thr-230–Trp-250 traverse the membrane as a helical segment. The Extracellular segment spans residues Ser-251–Pro-259. The chain crosses the membrane as a helical span at residues Val-260 to Ile-280. The Cytoplasmic segment spans residues Trp-281–Ser-309.

The protein belongs to the G-protein coupled receptor T2R family.

It is found in the membrane. The protein resides in the cell projection. The protein localises to the cilium membrane. In terms of biological role, receptor that may play a role in the perception of bitterness and is gustducin-linked. May play a role in sensing the chemical composition of the gastrointestinal content. The activity of this receptor may stimulate alpha gustducin, mediate PLC-beta-2 activation and lead to the gating of TRPM5. In airway epithelial cells, binding of bitter compounds increases the intracellular calcium ion concentration and stimulates ciliary beat frequency. The sequence is that of Taste receptor type 2 member 46 (TAS2R46) from Gorilla gorilla gorilla (Western lowland gorilla).